The primary structure comprises 855 residues: MESLSQHTPMMQQYWKLKREHPDQLMFYRMGDFYELFYEDAKKAAKLLDITLTARGQSAGKSIPMAGIPFHSVEGYLAKLVKLGESVAICEQIGDPATTKGPVERQVVRIITPGTVSDEALLDERRDNLLAAVVGDERLFGLAILDITSGRFNVQEIQGWENLLAELERLNPAELLYPDDWPAGLPLEKRRGAHRRAPWDFDFDSAYKSLCQQFATQDLKGFGCDGLGLAIGAAGCLLAYARETQRTALPHLRGLRHERLDDTVILDGASRRNLELDVNLSGGRDNTLQSVIDRCQTAMGSRLLGRWLNRPLRDRAVLEARQDTVACLLQDYRFESLQPQLKEIGDVERILARIGLRNARPRDLARLRDALAALPQLQTALSPLEAPHLQALAGNIRTYPELAELLRRAIIDNPPAVIRDGGVLKQGYDAELDELLSLSENAGQFLMDLEAREKARTGLPNLKVGYNRIHGYYIELPRVQAEQAPADYIRRQTLKGAERFITPELKAFEDKALSAKSRALAREKALYEELLEILIAQLAPLQETATALAELDVLANLAERALNLDFNRPRFVEEPCLRIRQGRHPVVEQVLDTPFVANDLELDDNTRMLIITGPNMGGKSTYMRQTALIVLLAHIGSFVPAQSCELSLVDRIFTRIGSSDDLAGGRSTFMVEMSETANILHNASERSLVLMDEVGRGTSTFDGLSLAWAAAEHLAGLRAWTLFATHYFELTVLAESQPVVANVHLSATEHNERIVFLHHVLPGPASQSYGLAVAQLAGVPGPVISRAREHLARLEATSLPHEAPLREAGKPQPPIQSDLFASLPHPLMEELARLKPDDLSPRQALELLYSWKTRL.

An ATP-binding site is contributed by 613-620 (GPNMGGKS).

The protein belongs to the DNA mismatch repair MutS family.

Its function is as follows. This protein is involved in the repair of mismatches in DNA. It is possible that it carries out the mismatch recognition step. This protein has a weak ATPase activity. This is DNA mismatch repair protein MutS from Azotobacter vinelandii (strain DJ / ATCC BAA-1303).